We begin with the raw amino-acid sequence, 81 residues long: Small ribosomal subunit protein bS18 (81 aa).

Belongs to the bacterial ribosomal protein bS18 family. In terms of assembly, part of the 30S ribosomal subunit. Forms a tight heterodimer with protein bS6.

Its function is as follows. Binds as a heterodimer with protein bS6 to the central domain of the 16S rRNA, where it helps stabilize the platform of the 30S subunit. The sequence is that of Small ribosomal subunit protein bS18 from Desulfotalea psychrophila (strain LSv54 / DSM 12343).